Reading from the N-terminus, the 343-residue chain is Probable siderophore transport system permease protein YfhA (343 aa).

The next 9 helical transmembrane spans lie at 15-35, 69-89, 97-117, 130-150, 160-180, 204-224, 249-269, 289-309, and 317-337; these read WIVFLVLLGLTAAVLIISAGL, ILTALCAGVCLAAAGAILQGL, PDIIGITGGAAVAVVLLMMFF, WLPAAAFIGASAVGLIVYLLA, LVLIGIGFSMSAQAMTTLLMI, QHVKIAIILSVILLFICFVAL, FFLLLLSTALTGCAVSVAGTI, GALLPASALIGALLVLTADIV, and VEVPAGVFTAAIGAPYFIYLL.

The protein belongs to the binding-protein-dependent transport system permease family. FecCD subfamily. As to quaternary structure, the complex is composed of one ATP-binding protein (YusV), two transmembrane proteins (YfiZ and YfhA) and a solute-binding protein (YfiY).

The protein localises to the cell membrane. In terms of biological role, part of the ABC transporter complex YfiYZ/YfhA/YusV involved in import of the iron-hydroxamate siderophores schizokinen, arthrobactin and corprogen. The polypeptide is Probable siderophore transport system permease protein YfhA (yfhA) (Bacillus subtilis (strain 168)).